The chain runs to 89 residues: Putative ankyrin repeat protein RF_1157 (89 aa).

The stretch at 2 to 32 is one ANK repeat; the sequence is YNTTPLNFAINQENNEEVIKYLLANGANPRL.

This Rickettsia felis (strain ATCC VR-1525 / URRWXCal2) (Rickettsia azadi) protein is Putative ankyrin repeat protein RF_1157.